A 60-amino-acid polypeptide reads, in one-letter code: UPF0434 protein ESA_02427 (60 aa).

It belongs to the UPF0434 family.

The sequence is that of UPF0434 protein ESA_02427 from Cronobacter sakazakii (strain ATCC BAA-894) (Enterobacter sakazakii).